The sequence spans 537 residues: Pentatricopeptide repeat-containing protein At4g32450, mitochondrial (537 aa).

The N-terminal 110 residues, 1-110 (MIYTLTRGSL…EHSEIINQRN (110 aa)), are a transit peptide targeting the mitochondrion. Positions 113-140 (WQSSDGCSSYGTTGNGVPQENNTGGNHF) are enriched in polar residues. The disordered stretch occupies residues 113–148 (WQSSDGCSSYGTTGNGVPQENNTGGNHFQQDHSGHS). PPR repeat units lie at residues 145-179 (SGHS…GYVV), 180-210 (DLPR…ITSS), 215-249 (DISA…NLET), 250-280 (WCGV…GNKP), 281-316 (DGEM…GIIP), and 317-347 (CMEH…MEPN). Positions 412 to 442 (YGIRYMAAGDISRPENRELYMALKSLKEHMI) are type E(+) motif. The tract at residues 443 to 537 (EIGYVPLSKL…DGVCSCREYW (95 aa)) is type DYW motif.

Belongs to the PPR family. PCMP-H subfamily.

The protein resides in the mitochondrion. The polypeptide is Pentatricopeptide repeat-containing protein At4g32450, mitochondrial (PCMP-H63) (Arabidopsis thaliana (Mouse-ear cress)).